The sequence spans 235 residues: 7-cyano-7-deazaguanine synthase (235 aa).

ATP is bound at residue 16–26 (FSGGQDSTTCL). Zn(2+) is bound by residues Cys-193, Cys-201, Cys-204, and Cys-207.

This sequence belongs to the QueC family. It depends on Zn(2+) as a cofactor.

The catalysed reaction is 7-carboxy-7-deazaguanine + NH4(+) + ATP = 7-cyano-7-deazaguanine + ADP + phosphate + H2O + H(+). It participates in purine metabolism; 7-cyano-7-deazaguanine biosynthesis. Catalyzes the ATP-dependent conversion of 7-carboxy-7-deazaguanine (CDG) to 7-cyano-7-deazaguanine (preQ(0)). The polypeptide is 7-cyano-7-deazaguanine synthase (Actinobacillus succinogenes (strain ATCC 55618 / DSM 22257 / CCUG 43843 / 130Z)).